A 456-amino-acid chain; its full sequence is MDSRLQEIRERQKLRRQLLAQQLGAESADSIGALLNSKDEQREIAETRETCRASYDTSAPNAKRKYQDEGETDEDKMEEYKDELEMQQEEENLPYEEEIYKDSSTFLKGTQSLNPHNDYCQHFVDTGHRPQNFIRDVGLADRFEEYPKLRELIRLKDELIAKSNTPPMYLQADIEAFDIRELTPKFDVILLEPPLEEYYRETGITANEKCWTWDDIMKLEIDEIAAPRSFIFLWCGSGEGLDLGRVCLRKWGYRRCEDICWIKTNKNNPGKTKTLDPKAVFQRTKEHCLMGIKGTVKRSTDGDFIHANVDIDLIITEEPEIGNIEKPVEIFHIIEHFCLGRRRLHLFGRDSTIRPGWLTVGPTLTNSNYNAETYASYFSAPNSYLTGCTEEIERLRPKSPPPKSKSDRGGGAPRGGGRGGTSAGRGRERNRSNFRGERGGFRGGRGGAHRGGFPPR.

The disordered stretch occupies residues 45-76 (AETRETCRASYDTSAPNAKRKYQDEGETDEDK). 2 interaction with METTL3 regions span residues 135–136 (RD) and 237–238 (SG). The tract at residues 245–254 (RVCLRKWGYR) is positively charged region required for RNA-binding. 2 interaction with METTL3 regions span residues 255–258 (RCED) and 278–287 (KAVFQRTKEH). The tract at residues 297 to 298 (KR) is positively charged region required for RNA-binding. The interaction with METTL3 stretch occupies residues 308 to 312 (NVDID). A disordered region spans residues 393–456 (ERLRPKSPPP…GAHRGGFPPR (64 aa)). Ser399 is subject to Phosphoserine. A compositionally biased stretch (gly residues) spans 409–423 (GGGAPRGGGRGGTSA). The span at 425–440 (RGRERNRSNFRGERGG) shows a compositional bias: basic and acidic residues. Residues 441-450 (FRGGRGGAHR) are compositionally biased toward gly residues.

It belongs to the MT-A70-like family. As to quaternary structure, heterodimer; heterodimerizes with METTL3 to form an antiparallel heterodimer that constitutes an active methyltransferase. Component of the WMM complex, a N6-methyltransferase complex composed of a catalytic subcomplex, named MAC, and of an associated subcomplex, named MACOM. The MAC subcomplex is composed of METTL3 and METTL14. The MACOM subcomplex is composed of WTAP, ZC3H13, CBLL1/HAKAI, VIRMA, and, in some cases of RBM15 (RBM15 or RBM15B).

Its subcellular location is the nucleus. Its function is as follows. The METTL3-METTL14 heterodimer forms a N6-methyltransferase complex that methylates adenosine residues at the N(6) position of some mRNAs and regulates the circadian clock, differentiation of embryonic stem cells and cortical neurogenesis. In the heterodimer formed with METTL3, METTL14 constitutes the RNA-binding scaffold that recognizes the substrate rather than the catalytic core. N6-methyladenosine (m6A), which takes place at the 5'-[AG]GAC-3' consensus sites of some mRNAs, plays a role in mRNA stability and processing. M6A acts as a key regulator of mRNA stability by promoting mRNA destabilization and degradation. In embryonic stem cells (ESCs), m6A methylation of mRNAs encoding key naive pluripotency-promoting transcripts results in transcript destabilization. M6A regulates spermatogonial differentiation and meiosis and is essential for male fertility and spermatogenesis. M6A also regulates cortical neurogenesis: m6A methylation of transcripts related to transcription factors, neural stem cells, the cell cycle and neuronal differentiation during brain development promotes their destabilization and decay, promoting differentiation of radial glial cells. The polypeptide is N(6)-adenosine-methyltransferase non-catalytic subunit METTL14 (METTL14) (Bos taurus (Bovine)).